A 21-amino-acid polypeptide reads, in one-letter code: ENFKIKHTEPGLLSMANAGKN.

The interval 1-21 (ENFKIKHTEPGLLSMANAGKN) is disordered.

Belongs to the cyclophilin-type PPIase family. PPIase A subfamily.

It carries out the reaction [protein]-peptidylproline (omega=180) = [protein]-peptidylproline (omega=0). PPIases accelerate the folding of proteins. It catalyzes the cis-trans isomerization of proline imidic peptide bonds in oligopeptides. In Naegleria fowleri (Brain eating amoeba), this protein is Peptidyl-prolyl cis-trans isomerase.